The following is a 121-amino-acid chain: Large ribosomal subunit protein bL19 (121 aa).

This sequence belongs to the bacterial ribosomal protein bL19 family.

In terms of biological role, this protein is located at the 30S-50S ribosomal subunit interface and may play a role in the structure and function of the aminoacyl-tRNA binding site. This is Large ribosomal subunit protein bL19 from Amoebophilus asiaticus (strain 5a2).